The chain runs to 191 residues: Protein Ves (191 aa).

It belongs to the Ves family.

The sequence is that of Protein Ves from Escherichia coli (strain 55989 / EAEC).